Here is a 3799-residue protein sequence, read N- to C-terminus: Polyketide synthase GfsE (3799 aa).

One can recognise a Ketosynthase family 3 (KS3) 1 domain in the interval 33-459; sequence HEPIAIIGMS…GTNAHAILEE (427 aa). Module stretches follow at residues 33–1730 and 1749–3494; these read HEPI…RSSA and DEAI…RTDL. Catalysis depends on for beta-ketoacyl synthase 1 activity residues Cys206, His341, and His381. The segment at 462–496 is disordered; that stretch reads AATGNPTEADTDQEPAASASPDRTTTLPAVPWPLS. The Malonyl-CoA:ACP transacylase (MAT) 1 domain maps to 582-895; it reads FVFPGQGSQW…LGEAHAHGAD (314 aa). The interval 944–1069 is N-terminal hotdog fold 1; it reads HPLFGAVVEV…GVLELEARPE (126 aa). In terms of domain architecture, PKS/mFAS DH 1 spans 944–1222; it reads HPLFGAVVEV…SRPVAEEQLG (279 aa). Residue His976 is the Proton acceptor; for dehydratase activity 1 of the active site. Positions 1081 to 1222 are C-terminal hotdog fold 1; it reads AEVVPVEGLY…SRPVAEEQLG (142 aa). Residue Asp1142 is the Proton donor; for dehydratase activity 1 of the active site. The Ketoreductase (KR) 1 domain maps to 1382 to 1554; that stretch reads LLVTGASGVL…TSLSWGLWAE (173 aa). The Carrier 1 domain occupies 1652–1730; sequence EAERAVLELV…ALATHIRSSA (79 aa). At Ser1690 the chain carries O-(pantetheine 4'-phosphoryl)serine. The 426-residue stretch at 1749–2174 folds into the Ketosynthase family 3 (KS3) 2 domain; the sequence is DEAIAIVGMA…GTNAHVILEQ (426 aa). Residues Cys1921, His2056, and His2096 each act as for beta-ketoacyl synthase 2 activity in the active site. In terms of domain architecture, Malonyl-CoA:ACP transacylase (MAT) 2 spans 2284-2604; sequence FVFPGQGSQW…VSLAKVHTHG (321 aa). The N-terminal hotdog fold 2 stretch occupies residues 2656 to 2781; sequence HPLLTGVVDL…GTLAVDADHD (126 aa). A PKS/mFAS DH 2 domain is found at 2656 to 2936; sequence HPLLTGVVDL…TRPVTAAQFA (281 aa). The Proton acceptor; for dehydratase activity 2 role is filled by His2688. The tract at residues 2794 to 2936 is C-terminal hotdog fold 2; it reads ADPVDLTEVY…TRPVTAAQFA (143 aa). The active-site Proton donor; for dehydratase activity 2 is Asp2855. The 173-residue stretch at 3142–3314 folds into the Ketoreductase (KR) 2 domain; that stretch reads LLVTGASGVL…TALSWGLWAE (173 aa). Residues 3419 to 3494 enclose the Carrier 2 domain; the sequence is AALLDLVGAQ…ALAAQLRTDL (76 aa). The residue at position 3454 (Ser3454) is an O-(pantetheine 4'-phosphoryl)serine.

Requires pantetheine 4'-phosphate as cofactor.

It participates in antibiotic biosynthesis. In terms of biological role, fifth protein in the synthesis of the 16-membered macrolide antibiotics FD-891 and FD-892. Composed of 2 modules. Modifies the product of GfsD by multiple rounds of addition of methylmalonyl-CoA and other modifications to help generate the final products. This Streptomyces halstedii protein is Polyketide synthase GfsE.